A 219-amino-acid polypeptide reads, in one-letter code: Probable GTP-binding protein EngB (219 aa).

The EngB-type G domain maps to 42 to 219; it reads SVPEIAFAGR…RTAVLEAVEL (178 aa). Residues 50–57, 77–81, 97–100, 164–167, and 198–200 contribute to the GTP site; these read GRSNVGKS, GRTQE, DMPG, TKAD, and TSS. 2 residues coordinate Mg(2+): Ser-57 and Thr-79.

This sequence belongs to the TRAFAC class TrmE-Era-EngA-EngB-Septin-like GTPase superfamily. EngB GTPase family. Mg(2+) is required as a cofactor.

In terms of biological role, necessary for normal cell division and for the maintenance of normal septation. The chain is Probable GTP-binding protein EngB from Sphingopyxis alaskensis (strain DSM 13593 / LMG 18877 / RB2256) (Sphingomonas alaskensis).